Consider the following 155-residue polypeptide: Small ribosomal subunit protein uS7cz/uS7cy (155 aa).

This sequence belongs to the universal ribosomal protein uS7 family. Part of the 30S ribosomal subunit.

It localises to the plastid. It is found in the chloroplast. In terms of biological role, one of the primary rRNA binding proteins, it binds directly to 16S rRNA where it nucleates assembly of the head domain of the 30S subunit. In Chloranthus spicatus (Chulantree), this protein is Small ribosomal subunit protein uS7cz/uS7cy (rps7-A).